The chain runs to 883 residues: Valine--tRNA ligase (883 aa).

The 'HIGH' region motif lies at 46 to 56 (PNVTGKLHLGH). The 'KMSKS' region signature appears at 520-524 (KMSKS). K523 contributes to the ATP binding site. A coiled-coil region spans residues 809–844 (LADLLNVEEELARLEKELAKWQKELDMVGKKLSNER).

The protein belongs to the class-I aminoacyl-tRNA synthetase family. ValS type 1 subfamily. Monomer.

The protein resides in the cytoplasm. It carries out the reaction tRNA(Val) + L-valine + ATP = L-valyl-tRNA(Val) + AMP + diphosphate. Its function is as follows. Catalyzes the attachment of valine to tRNA(Val). As ValRS can inadvertently accommodate and process structurally similar amino acids such as threonine, to avoid such errors, it has a 'posttransfer' editing activity that hydrolyzes mischarged Thr-tRNA(Val) in a tRNA-dependent manner. In Streptococcus thermophilus (strain CNRZ 1066), this protein is Valine--tRNA ligase.